We begin with the raw amino-acid sequence, 239 residues long: Methylthioribulose-1-phosphate dehydratase (239 aa).

Residue Cys94 coordinates substrate. His112 and His114 together coordinate Zn(2+). Glu136 functions as the Proton donor/acceptor in the catalytic mechanism. Position 192 (His192) interacts with Zn(2+).

This sequence belongs to the aldolase class II family. MtnB subfamily. Zn(2+) is required as a cofactor.

It localises to the cytoplasm. It catalyses the reaction 5-(methylsulfanyl)-D-ribulose 1-phosphate = 5-methylsulfanyl-2,3-dioxopentyl phosphate + H2O. Its pathway is amino-acid biosynthesis; L-methionine biosynthesis via salvage pathway; L-methionine from S-methyl-5-thio-alpha-D-ribose 1-phosphate: step 2/6. Catalyzes the dehydration of methylthioribulose-1-phosphate (MTRu-1-P) into 2,3-diketo-5-methylthiopentyl-1-phosphate (DK-MTP-1-P). Functions in the methionine salvage pathway. May play a role in apoptosis. The sequence is that of Methylthioribulose-1-phosphate dehydratase from Xenopus laevis (African clawed frog).